A 517-amino-acid chain; its full sequence is MDIIGGQHLRQMWDDLADVYGHKTALICESSGGVVNRYSYLELNQEINRTANLFYTLGIRKGDKVALHLDNCPEFIFCWFGLAKIGAIMVPINARLLCEESAWILQNSQACLLVTSAQFYPMYQQIQQEDATQLRHICLTDVALPADDGVSSFTQLKNQQPATLCYAPPLSTDDTAEILFTSGTTSRPKGVVITHYNLRFAGYYSAWQCALRDDDVYLTVMPAFHIDCQCTAAMAAFSAGATFVLVEKYSARAFWGQVQKYRATVTECIPMMIRTLMVQPPSANDQQHRLREVMFYLNLSEQEKDAFCERFGVRLLTSYGMTETIVGIIGDRPGDKRRWPSIGRVGFCYEAEIRDDHNRPLPAGEIGEICIKGIPGKTIFKEYFLNPQATAKVLEADGWLHTGDTGYRDEEGFFYFVDRRCNMIKRGGENVSCVELENIIAAHPKIQDIVVVGIKDSIRDEAIKAFVVLNEGETLSEEEFFRFCEQNMAKFKVPSYLEIRKDLPRNCSGKIIRKNLK.

It belongs to the ATP-dependent AMP-binding enzyme family.

It carries out the reaction 4-(trimethylamino)butanoate + ATP + CoA = 4-(trimethylamino)butanoyl-CoA + AMP + diphosphate. The catalysed reaction is crotonobetaine + ATP + CoA = crotonobetainyl-CoA + AMP + diphosphate. It catalyses the reaction (R)-carnitine + ATP + CoA = (R)-carnitinyl-CoA + AMP + diphosphate. Its pathway is amine and polyamine metabolism; carnitine metabolism. In terms of biological role, catalyzes the transfer of CoA to carnitine, generating the initial carnitinyl-CoA needed for the CaiB reaction cycle. Also has activity toward crotonobetaine and gamma-butyrobetaine. The chain is Crotonobetaine/carnitine--CoA ligase from Escherichia coli (strain ATCC 8739 / DSM 1576 / NBRC 3972 / NCIMB 8545 / WDCM 00012 / Crooks).